We begin with the raw amino-acid sequence, 265 residues long: Orotidine 5'-phosphate decarboxylase (265 aa).

Substrate is bound by residues Asp-38, 60–62 (KTH), 91–100 (DRKFADIGNT), Tyr-213, and Arg-232. Lys-93 (proton donor) is an active-site residue.

Belongs to the OMP decarboxylase family.

It catalyses the reaction orotidine 5'-phosphate + H(+) = UMP + CO2. It participates in pyrimidine metabolism; UMP biosynthesis via de novo pathway; UMP from orotate: step 2/2. The sequence is that of Orotidine 5'-phosphate decarboxylase (pyrG) from Rhizopus oryzae (Mucormycosis agent).